Here is a 141-residue protein sequence, read N- to C-terminus: Protein nfe1 (141 aa).

To the N-terminal of nitrogenase iron protein (NifH). Has lost the ATP-binding site.

In terms of biological role, responsible for the nodulation efficiency and competitive ability of strain GR4 on alfalfa roots. The protein is Protein nfe1 (nfe1) of Rhizobium meliloti (Ensifer meliloti).